The chain runs to 117 residues: Protein OPG035 (117 aa).

It belongs to the poxviridae OPG035 family.

Functionally, bcl-2-like protein which contributes to virulence by preventing host NF-kappa-B activation in response to pro-inflammatory stimuli such as TNF-alpha or IL1B. This Bos taurus (Bovine) protein is Protein OPG035 (OPG035).